A 554-amino-acid chain; its full sequence is Dihydroxy-acid dehydratase (554 aa).

D78 lines the Mg(2+) pocket. C119 serves as a coordination point for [2Fe-2S] cluster. Mg(2+) is bound by residues D120 and K121. Position 121 is an N6-carboxylysine (K121). Residue C191 coordinates [2Fe-2S] cluster. Residue E444 coordinates Mg(2+). S470 functions as the Proton acceptor in the catalytic mechanism.

The protein belongs to the IlvD/Edd family. In terms of assembly, homodimer. [2Fe-2S] cluster serves as cofactor. It depends on Mg(2+) as a cofactor.

It catalyses the reaction (2R)-2,3-dihydroxy-3-methylbutanoate = 3-methyl-2-oxobutanoate + H2O. The catalysed reaction is (2R,3R)-2,3-dihydroxy-3-methylpentanoate = (S)-3-methyl-2-oxopentanoate + H2O. The protein operates within amino-acid biosynthesis; L-isoleucine biosynthesis; L-isoleucine from 2-oxobutanoate: step 3/4. It participates in amino-acid biosynthesis; L-valine biosynthesis; L-valine from pyruvate: step 3/4. Functions in the biosynthesis of branched-chain amino acids. Catalyzes the dehydration of (2R,3R)-2,3-dihydroxy-3-methylpentanoate (2,3-dihydroxy-3-methylvalerate) into 2-oxo-3-methylpentanoate (2-oxo-3-methylvalerate) and of (2R)-2,3-dihydroxy-3-methylbutanoate (2,3-dihydroxyisovalerate) into 2-oxo-3-methylbutanoate (2-oxoisovalerate), the penultimate precursor to L-isoleucine and L-valine, respectively. In Nitratidesulfovibrio vulgaris (strain DP4) (Desulfovibrio vulgaris), this protein is Dihydroxy-acid dehydratase.